The following is an 86-amino-acid chain: Small ribosomal subunit protein uS17 (86 aa).

It belongs to the universal ribosomal protein uS17 family. In terms of assembly, part of the 30S ribosomal subunit.

In terms of biological role, one of the primary rRNA binding proteins, it binds specifically to the 5'-end of 16S ribosomal RNA. This chain is Small ribosomal subunit protein uS17, found in Exiguobacterium sp. (strain ATCC BAA-1283 / AT1b).